We begin with the raw amino-acid sequence, 169 residues long: Chorismate pyruvate-lyase (169 aa).

Substrate-binding residues include methionine 37, arginine 79, leucine 117, and glutamate 158.

Belongs to the UbiC family. In terms of assembly, monomer.

The protein localises to the cytoplasm. It catalyses the reaction chorismate = 4-hydroxybenzoate + pyruvate. It participates in cofactor biosynthesis; ubiquinone biosynthesis. Removes the pyruvyl group from chorismate, with concomitant aromatization of the ring, to provide 4-hydroxybenzoate (4HB) for the ubiquinone pathway. The polypeptide is Chorismate pyruvate-lyase (Proteus mirabilis (strain HI4320)).